We begin with the raw amino-acid sequence, 491 residues long: uncharacterized protein (491 aa).

Positions 1–92 (MSFVIASPEA…GGGSYASAEI (92 aa)) constitute a PE domain. Disordered regions lie at residues 114–156 (PLVG…AGGA), 376–400 (AGGS…GNPG), and 419–491 (AGQG…GPDG). The segment covering 128 to 145 (GQPGGDGGILWGNGGNGG) has biased composition (gly residues). Residues 432-480 (GGPGGVGGHGGTAILFGDGGAGGAGAAGGPGTPDGAAGPGGSGGTGGLL) are compositionally biased toward gly residues.

This sequence belongs to the mycobacterial PE family. PGRS subfamily.

This is an uncharacterized protein from Mycobacterium bovis (strain ATCC BAA-935 / AF2122/97).